Consider the following 284-residue polypeptide: uncharacterized protein (284 aa).

A disordered region spans residues 236–284 (IDITNEADSSEIIDSEPSNKDETEKPSAQETDPFDGKPVDIKDDELPFD). 2 stretches are compositionally biased toward basic and acidic residues: residues 252-262 (PSNKDETEKPS) and 269-284 (FDGKPVDIKDDELPFD).

This is an uncharacterized protein from Bacillus subtilis (strain 168).